A 591-amino-acid polypeptide reads, in one-letter code: Reduced folate transporter (591 aa).

Met1 bears the N-acetylmethionine mark. Topologically, residues 1–29 (MVPSSPAVEKQVPVEPGPDPELRSWRHLV) are cytoplasmic. Ser5 carries the phosphoserine modification. A helical transmembrane segment spans residues 30-50 (CYLCFYGFMAQIRPGESFITP). Residues Ile48 and Thr49 each contribute to the folate site. At 51 to 64 (YLLGPDKNFTREQV) the chain is on the extracellular side. Residue Asn58 is glycosylated (N-linked (GlcNAc...) asparagine). The helical transmembrane segment at 65-87 (TNEITPVLSYSYLAVLVPVFLLT) threads the bilayer. Topologically, residues 88 to 91 (DYLR) are cytoplasmic. Residues 92–112 (YTPVLLLQGLSFVSVWLLLLL) traverse the membrane as a helical segment. Over 113–116 (GHSV) the chain is Extracellular. Residues 117-139 (AHMQLMELFYSVTMAARIAYSSY) traverse the membrane as a helical segment. Positions 123 and 133 each coordinate folate. Arg133, Ile134, Ser137, Tyr149, and Arg157 together coordinate 2',3'-cGAMP. The Cytoplasmic segment spans residues 140–153 (IFSLVRPARYQRVA). Residues 154–178 (GYSRAAVLLGVFTSSVLGQLLVTVG) form a helical membrane-spanning segment. Val164 serves as a coordination point for folate. At 179-183 (RVSFS) the chain is on the extracellular side. A helical transmembrane segment spans residues 184 to 202 (TLNYISLAFLTFSVVLALF). At 203 to 266 (LKRPKRSLFF…ELGDSLRRPQ (64 aa)) the chain is on the cytoplasmic side. Position 225 is a phosphoserine (Ser225). A helical transmembrane segment spans residues 267–292 (LRLWSLWWVFNSAGYYLVVYYVHILW). Folate contacts are provided by Tyr281, Tyr282, and Tyr286. Residue Tyr282 coordinates 2',3'-cGAMP. Topologically, residues 293–304 (NEVDPTTNSARV) are extracellular. The helical transmembrane segment at 305 to 327 (YNGAADAASTLLGAITSFAAGFV) threads the bilayer. Residue Ser321 coordinates 2',3'-cGAMP. Residues 328 to 333 (KIRWAR) lie on the Cytoplasmic side of the membrane. A helical transmembrane segment spans residues 334–354 (WSKLLIAGVTATQAGLVFLLA). At 355 to 360 (HTRHPS) the chain is on the extracellular side. A helical membrane pass occupies residues 361–384 (SIWLCYAAFVLFRGSYQFLVPIAT). Folate contacts are provided by Arg373 and Gln377. Residues Gln377, Pro381, Thr384, Lys393, Cys396, and Phe400 each contribute to the 2',3'-cGAMP site. Residues 385–398 (FQIASSLSKELCAL) lie on the Cytoplasmic side of the membrane. Residues 399–422 (VFGVNTFFATIVKTIITFIVSDVR) form a helical membrane-spanning segment. A required for substrate-binding region spans residues 407–419 (ATIVKTIITFIVS). The Extracellular portion of the chain corresponds to 423-430 (GLGLPVRK). A helical transmembrane segment spans residues 431–455 (QFQLYSVYFLILSIIYFLGAMLDGL). Over 456–591 (RHCQRGHHPR…PSDGVQNVNQ (136 aa)) the chain is Cytoplasmic. Residues Ser474, Ser485, Ser499, and Ser503 each carry the phosphoserine modification.

The protein belongs to the reduced folate carrier (RFC) transporter (TC 2.A.48) family. Placenta, liver, and to a much smaller extent, in lung.

It is found in the cell membrane. It localises to the apical cell membrane. The protein localises to the basolateral cell membrane. The enzyme catalyses 5-amino-1-(5-phospho-beta-D-ribosyl)imidazole-4-carboxamide(in) + (6S)-5-methyl-5,6,7,8-tetrahydrofolate(out) = 5-amino-1-(5-phospho-beta-D-ribosyl)imidazole-4-carboxamide(out) + (6S)-5-methyl-5,6,7,8-tetrahydrofolate(in). It catalyses the reaction 2',3'-cGAMP(out) + 5-amino-1-(5-phospho-beta-D-ribosyl)imidazole-4-carboxamide(in) = 2',3'-cGAMP(in) + 5-amino-1-(5-phospho-beta-D-ribosyl)imidazole-4-carboxamide(out). It carries out the reaction 3',3'-cGAMP(out) + 5-amino-1-(5-phospho-beta-D-ribosyl)imidazole-4-carboxamide(in) = 3',3'-cGAMP(in) + 5-amino-1-(5-phospho-beta-D-ribosyl)imidazole-4-carboxamide(out). Its function is as follows. Antiporter that mediates the import of reduced folates or a subset of cyclic dinucleotides, driven by the export of organic anions. Acts as an importer of immunoreactive cyclic dinucleotides, such as cyclic GMP-AMP (2'-3'-cGAMP), an immune messenger produced in response to DNA virus in the cytosol, and its linkage isomer 3'-3'-cGAMP, thus playing a role in triggering larger immune responses. Mechanistically, acts as a secondary active transporter, which exports intracellular organic anions down their concentration gradients to facilitate the uptake of its substrates. Has high affinity for N5-methyltetrahydrofolate, the predominant circulating form of folate. Also mediates the import of antifolate drug methotrexate. 5-amino-4-imidazolecarboxamide riboside (AICAR), when phosphorylated to AICAR monophosphate, can serve as an organic anion for antiporter activity. In Homo sapiens (Human), this protein is Reduced folate transporter.